Consider the following 378-residue polypeptide: Ribosomal RNA large subunit methyltransferase G (378 aa).

Belongs to the methyltransferase superfamily. RlmG family.

The protein resides in the cytoplasm. It carries out the reaction guanosine(1835) in 23S rRNA + S-adenosyl-L-methionine = N(2)-methylguanosine(1835) in 23S rRNA + S-adenosyl-L-homocysteine + H(+). Functionally, specifically methylates the guanine in position 1835 (m2G1835) of 23S rRNA. The protein is Ribosomal RNA large subunit methyltransferase G of Shewanella sp. (strain W3-18-1).